Reading from the N-terminus, the 173-residue chain is NADH-ubiquinone oxidoreductase chain 6 (173 aa).

5 helical membrane-spanning segments follow: residues 1 to 21 (MTYFVVFLGLCFVLGGLAVAS), 27 to 47 (YGVVGLVLASVVGCGWLLSLG), 48 to 68 (VSFVSLVLFMVYLGGMLVVFV), 87 to 107 (VVGYGASFVVVLMVGGVIGGF), and 139 to 159 (CGVGMFLVAGWGLVLTLFVVL).

This sequence belongs to the complex I subunit 6 family.

The protein localises to the mitochondrion membrane. The enzyme catalyses a ubiquinone + NADH + 5 H(+)(in) = a ubiquinol + NAD(+) + 4 H(+)(out). Core subunit of the mitochondrial membrane respiratory chain NADH dehydrogenase (Complex I) that is believed to belong to the minimal assembly required for catalysis. Complex I functions in the transfer of electrons from NADH to the respiratory chain. The immediate electron acceptor for the enzyme is believed to be ubiquinone. In Cepphus columba (Pigeon guillemot), this protein is NADH-ubiquinone oxidoreductase chain 6 (MT-ND6).